Here is a 182-residue protein sequence, read N- to C-terminus: UPF0397 protein BCQ_2505 (182 aa).

5 helical membrane-spanning segments follow: residues 9–29 (VVAI…GFSI), 40–60 (AILT…IGLI), 71–91 (WGIW…MGFI), 114–134 (ITGL…DIIV), and 142–162 (IVIQ…VLGL).

It belongs to the UPF0397 family.

It is found in the cell membrane. The protein is UPF0397 protein BCQ_2505 of Bacillus cereus (strain Q1).